Consider the following 96-residue polypeptide: Co-chaperonin GroES (96 aa).

This sequence belongs to the GroES chaperonin family. As to quaternary structure, heptamer of 7 subunits arranged in a ring. Interacts with the chaperonin GroEL.

The protein localises to the cytoplasm. Functionally, together with the chaperonin GroEL, plays an essential role in assisting protein folding. The GroEL-GroES system forms a nano-cage that allows encapsulation of the non-native substrate proteins and provides a physical environment optimized to promote and accelerate protein folding. GroES binds to the apical surface of the GroEL ring, thereby capping the opening of the GroEL channel. The sequence is that of Co-chaperonin GroES from Vibrio atlanticus (strain LGP32) (Vibrio splendidus (strain Mel32)).